The primary structure comprises 803 residues: Dynein axonemal intermediate chain 4 (803 aa).

Positions 1 to 33 (MPSSPTSTRKQTNFTASVSAQSRKSISFGNPKS) are enriched in polar residues. Disordered regions lie at residues 1–41 (MPSS…GYAG), 88–109 (LYHP…SQEG), and 143–163 (STVS…LEDP). Residues 143–155 (STVSKSSISTTES) show a composition bias toward low complexity. WD repeat units follow at residues 492-532 (QSPY…NTPV), 541-589 (KHLG…DCHD), 616-656 (SRQA…QYLE), 660-700 (GHKG…PFFT), 703-742 (PTTY…LDPL), and 748-787 (NPGI…TPTE).

In terms of assembly, part of the multisubunit axonemal dynein complex formed at least of two heavy chains and a number of intermediate and light chains. Associated with axonemal dynein subunits such as, DNAH2, DNAI3, and DYNLT1. Interacts with DYNLT1.

The protein localises to the cytoplasm. It is found in the cytoskeleton. The protein resides in the flagellum axoneme. Its subcellular location is the cilium axoneme. It localises to the dynein axonemal particle. Functionally, plays a critical role in the assembly of axonemal dynein complex, thereby playing a role in ciliary motility. In Rattus norvegicus (Rat), this protein is Dynein axonemal intermediate chain 4.